Consider the following 85-residue polypeptide: Conotoxin Cap15a (85 aa).

Positions 1–23 are cleaved as a signal peptide; it reads MEKLTFLILVATVLLTIHVLVQS. Positions 24-49 are excised as a propeptide; the sequence is VGDKHLKRRPKQYATKHLSALMRGHR. Residue glutamine 50 is modified to Pyrrolidone carboxylic acid.

This sequence belongs to the conotoxin O2 superfamily. Post-translationally, contains 4 disulfide bonds. Expressed by the venom duct.

It localises to the secreted. This Conus capitaneus (Captain cone) protein is Conotoxin Cap15a.